A 541-amino-acid chain; its full sequence is Glucose-6-phosphate isomerase (541 aa).

Residue glutamate 353 is the Proton donor of the active site. Residues histidine 384 and lysine 504 contribute to the active site.

It belongs to the GPI family.

It is found in the cytoplasm. It carries out the reaction alpha-D-glucose 6-phosphate = beta-D-fructose 6-phosphate. It functions in the pathway carbohydrate biosynthesis; gluconeogenesis. It participates in carbohydrate degradation; glycolysis; D-glyceraldehyde 3-phosphate and glycerone phosphate from D-glucose: step 2/4. Catalyzes the reversible isomerization of glucose-6-phosphate to fructose-6-phosphate. The polypeptide is Glucose-6-phosphate isomerase (Deinococcus radiodurans (strain ATCC 13939 / DSM 20539 / JCM 16871 / CCUG 27074 / LMG 4051 / NBRC 15346 / NCIMB 9279 / VKM B-1422 / R1)).